A 1077-amino-acid chain; its full sequence is Deoxyribonuclease CdiA (1077 aa).

An FHA-2 region spans residues 67 to 384 (IGTSRQKTTD…DRDNYDAKQS (318 aa)). The segment covering 531 to 546 (QQNVDDLSRDTGNANG) has biased composition (polar residues). A disordered region spans residues 531–555 (QQNVDDLSRDTGNANGSIGPIFDKE). A VENN CT cleavage motif motif is present at residues 781 to 784 (VENN). The segment at 954-1077 (MPWEDYVGKT…GVKVTVTQVK (124 aa)) is DNase activity.

In terms of assembly, interacts with cognate immunity protein CdiI-YPIII, which blocks its toxic DNase activity. Requires Zn(2+) as cofactor.

The protein resides in the target cell. The protein localises to the target cell cytoplasm. Functionally, toxic component of a toxin-immunity protein module, which functions as a cellular contact-dependent growth inhibition (CDI) system. CDI modules allow bacteria to communicate with and inhibit the growth of closely related neighboring bacteria in a contact-dependent fashion. The C-terminal 123 residues (954-1077) has DNase activity in the presence of Zn(2+), converting supercoiled DNA into open-circular form. Toxic activity is neutralized by coexpression of the cognate immunity protein CdiI-YPIII, but not by non-cognate immunity proteins from other toxin-immunity modules. Expression of the DNase domain as a chimera allows bacteria to attack other non-immune bacteria which become filamentous and have lost DNA staining. Its function is as follows. The CdiA protein is thought to be exported from the cell through the central lumen of CdiB, the other half of its two-partner system (TPS). The TPS domain probably remains associated with CdiB while the FHA-1 domain forms an extended filament with the receptor-binding domain (RBD) at its extremity; in the secretion arrested state the C-terminus of the RBD and YP domains form a hairpin-like structure as the FHA-2, PT and CT domains are periplasmic. The YP domain is probably responsible for this arrest at the point where it re-enters the host cell periplasm. Upon binding to a target cell outer membrane receptor a signal is transmitted to activate secretion. The filament elongates slightly, the rest of CdiA is secreted and the FHA-2 domain becomes stably associated with the target cell's outer membrane where it facilitates entry of the toxic CT domain into the target cell periplasm. From there the toxic CT domain is cleaved and gains access to the target cell cytoplasm via an inner membrane protein. This Yersinia pseudotuberculosis serotype O:3 (strain YPIII) protein is Deoxyribonuclease CdiA.